The sequence spans 192 residues: Thymidine kinase (192 aa).

ATP contacts are provided by residues 9-16 and 85-88; these read GAMNSGKT and DEAQ. Catalysis depends on E86, which acts as the Proton acceptor. Positions 143, 146, 180, and 183 each coordinate Zn(2+).

Belongs to the thymidine kinase family. Homotetramer.

The protein resides in the cytoplasm. It carries out the reaction thymidine + ATP = dTMP + ADP + H(+). This chain is Thymidine kinase, found in Lactiplantibacillus plantarum (strain ATCC BAA-793 / NCIMB 8826 / WCFS1) (Lactobacillus plantarum).